We begin with the raw amino-acid sequence, 120 residues long: Large ribosomal subunit protein uL18 (120 aa).

The protein belongs to the universal ribosomal protein uL18 family. In terms of assembly, part of the 50S ribosomal subunit; part of the 5S rRNA/L5/L18/L25 subcomplex. Contacts the 5S and 23S rRNAs.

In terms of biological role, this is one of the proteins that bind and probably mediate the attachment of the 5S RNA into the large ribosomal subunit, where it forms part of the central protuberance. The sequence is that of Large ribosomal subunit protein uL18 from Rhodospirillum centenum (strain ATCC 51521 / SW).